The sequence spans 348 residues: Rhodopsin (348 aa).

At 1-33 (TEGPYFYVPMVNTTGIVRSPYEYPQYYLVNPAA) the chain is on the extracellular side. The N-linked (GlcNAc...) asparagine glycan is linked to Asn12. The chain crosses the membrane as a helical span at residues 34–58 (YAVLGAYMFFLIILGFPINFLTLYV). The Cytoplasmic segment spans residues 59–70 (TLEHKKLRTPLN). The helical transmembrane segment at 71–93 (YILLNLAVADLFMVIGGFTTTMY) threads the bilayer. Residues 94–107 (SSMHGYFVLGRLGC) are Extracellular-facing. Cys107 and Cys184 form a disulfide bridge. Residues 108–130 (NLEGFSATLGGMISLWSLAVLAI) traverse the membrane as a helical segment. A 'Ionic lock' involved in activated form stabilization motif is present at residues 131–133 (ERW). Residues 131–149 (ERWVVVCKPISNFRFGENH) are Cytoplasmic-facing. The helical transmembrane segment at 150–170 (AIMGVSLTWTMALACTVPPLV) threads the bilayer. The Extracellular portion of the chain corresponds to 171-199 (GWSRYIPEGMQCSCGIDYYTRAEGFNNES). N-linked (GlcNAc...) asparagine glycosylation is present at Asn197. The chain crosses the membrane as a helical span at residues 200 to 221 (FVLYMFFCHFMVPLIIIFFCYG). The Cytoplasmic segment spans residues 222–249 (RLLCAVKEAAAAQQESETTQRAEREVTR). The chain crosses the membrane as a helical span at residues 250-271 (MVILMVIGYLVCWLPYASVAWF). Residues 272-283 (IFTHQGSEFGPL) are Extracellular-facing. A helical membrane pass occupies residues 284–305 (FMTIPAFFAKSSSIYNPVIYIC). Lys293 is subject to N6-(retinylidene)lysine. The Cytoplasmic segment spans residues 306–348 (MNKQFRNCMITTLFCGKNPFEGEEEGASSTKTEASSASSVSPA). The S-palmitoyl cysteine moiety is linked to residue Cys320. The interval 327–348 (GEEEGASSTKTEASSASSVSPA) is disordered. The span at 332-348 (ASSTKTEASSASSVSPA) shows a compositional bias: low complexity.

It belongs to the G-protein coupled receptor 1 family. Opsin subfamily. In terms of processing, phosphorylated on some or all of the serine and threonine residues present in the C-terminal region. Post-translationally, contains one covalently linked retinal chromophore.

Its subcellular location is the membrane. It is found in the cell projection. The protein resides in the cilium. It localises to the photoreceptor outer segment. Functionally, photoreceptor required for image-forming vision at low light intensity. While most salt water fish species use retinal as chromophore, most freshwater fish use 3-dehydroretinal, or a mixture of retinal and 3-dehydroretinal. Light-induced isomerization of 11-cis to all-trans retinal triggers a conformational change that activates signaling via G-proteins. Subsequent receptor phosphorylation mediates displacement of the bound G-protein alpha subunit by arrestin and terminates signaling. The polypeptide is Rhodopsin (rho) (Neoniphon argenteus (Clearfin squirrelfish)).